A 366-amino-acid polypeptide reads, in one-letter code: Chorismate synthase (366 aa).

The NADP(+) site is built by Arg-48 and Arg-54. Residues 125-127, 241-242, Gly-285, 300-304, and Arg-326 each bind FMN; these read RSS, NA, and KPTSS.

The protein belongs to the chorismate synthase family. As to quaternary structure, homotetramer. It depends on FMNH2 as a cofactor.

The enzyme catalyses 5-O-(1-carboxyvinyl)-3-phosphoshikimate = chorismate + phosphate. Its pathway is metabolic intermediate biosynthesis; chorismate biosynthesis; chorismate from D-erythrose 4-phosphate and phosphoenolpyruvate: step 7/7. Catalyzes the anti-1,4-elimination of the C-3 phosphate and the C-6 proR hydrogen from 5-enolpyruvylshikimate-3-phosphate (EPSP) to yield chorismate, which is the branch point compound that serves as the starting substrate for the three terminal pathways of aromatic amino acid biosynthesis. This reaction introduces a second double bond into the aromatic ring system. This is Chorismate synthase from Cereibacter sphaeroides (strain ATCC 17029 / ATH 2.4.9) (Rhodobacter sphaeroides).